A 333-amino-acid polypeptide reads, in one-letter code: Type II secretion system protein K (333 aa).

Positions 1-7 are cleaved as a propeptide — leader sequence; the sequence is MRRGQNG. A helical transmembrane segment spans residues 8-29; the sequence is VALITVLLVVAVVTIVCAGLII. At 30–333 the chain is on the periplasmic side; the sequence is RQQLAIRSSA…GGDDWKKDER (304 aa). Residues 313 to 333 form a disordered region; sequence MGQGGLPIPSTGGDDWKKDER.

The protein belongs to the GSP K family. In terms of assembly, type II secretion is composed of four main components: the outer membrane complex, the inner membrane complex, the cytoplasmic secretion ATPase and the periplasm-spanning pseudopilus. Interacts with the tip of the type II pseudopilus subunits XcpV, XcpU and XcpW. Interacts with core component XcpT. In terms of processing, cleaved by prepilin peptidase.

It localises to the cell inner membrane. Functionally, component of the type II secretion system required for the energy-dependent secretion of extracellular factors such as proteases and toxins from the periplasm. Plays a role in pseudopilus assembly and seems to control its length. Interacts with the pseudopilus tip complex that is critical for the recognition and binding of secretion substrates. Type II pseudopilus confers increased bacterial adhesive capabilities. This chain is Type II secretion system protein K (xcpX), found in Pseudomonas aeruginosa (strain ATCC 15692 / DSM 22644 / CIP 104116 / JCM 14847 / LMG 12228 / 1C / PRS 101 / PAO1).